The chain runs to 422 residues: Phagosome assembly factor 1 (422 aa).

This sequence belongs to the PHAF1 family. As to quaternary structure, interacts with BCAS3; the interaction is requrired for the association with the phagophore.

It is found in the cytoplasm. The protein resides in the preautophagosomal structure. Its function is as follows. Plays a regulatory role in autophagic activity. In complex with BCAS3, associates with the autophagosome formation site during both non-selective and selective autophagy. The chain is Phagosome assembly factor 1 from Homo sapiens (Human).